The sequence spans 203 residues: RNA annealing protein YRA2 (203 aa).

Residue Met1 is modified to N-acetylmethionine. Disordered stretches follow at residues 1–60 and 137–203; these read MDKA…REEP and QPQR…YMKG. Positions 11 to 20 are enriched in polar residues; that stretch reads NSHTDSSSNH. A compositionally biased stretch (basic and acidic residues) spans 47–60; it reads SRSKDRLYREREEP. An RRM domain is found at 64 to 138; sequence KRIRISKIPL…AKIEVEIYQP (75 aa). The span at 139–153 shows a compositional bias: basic residues; it reads QRKHSRMNAHNRRKQ. Residues 154-164 are compositionally biased toward basic and acidic residues; the sequence is TAQEHGRDRPG. Residues 165–180 are compositionally biased toward basic residues; the sequence is SHYRQKPNRVSKKNKG.

Belongs to the YRA1 family. As to quaternary structure, associates with mRNPs. Interacts with YRA1.

The protein localises to the nucleus. In terms of biological role, involved in export of poly(A) mRNAs from the nucleus. Recruited to the coding sequences as well as poly-A sites of active genes. In Saccharomyces cerevisiae (strain YJM789) (Baker's yeast), this protein is RNA annealing protein YRA2 (YRA2).